Here is a 273-residue protein sequence, read N- to C-terminus: Protein GMH1 (273 aa).

The disordered stretch occupies residues 1 to 33 (MSYLPTYSNDLPAGPQGQRRRNNGNENDARQGY). At Ser-2 the chain carries N-acetylserine. The Cytoplasmic portion of the chain corresponds to 2–89 (SYLPTYSNDL…QTKNQWARDD (88 aa)). The chain crosses the membrane as a helical span at residues 90-110 (PSFFIFQIALISLSSIIWSIY). Over 111-134 (NSGFNNDSDMGALSIIGHFFKSLV) the chain is Lumenal. Residues 135–155 (MMVILDFFIFGFIMATIFYLL) traverse the membrane as a helical segment. Over 156 to 175 (LNRSHFKFKSSQNSVVEWAY) the chain is Cytoplasmic. The helical transmembrane segment at 176–196 (CFDVHCNSFLIILLCLYFIQF) threads the bilayer. At 197–216 (LLLPIINLQNWISLLIGNSL) the chain is on the lumenal side. Residues 217–237 (YCFAIGHYFILTFYGYNQLPF) form a helical membrane-spanning segment. The Cytoplasmic segment spans residues 238 to 242 (LKNLN). Residues 243–263 (FILLPTLGLSIIYLISLFGID) form a helical membrane-spanning segment. Topologically, residues 264 to 273 (LSKKLSFYNY) are lumenal.

The protein belongs to the unc-50 family. In terms of assembly, interacts with GEA1 and GEA2.

It localises to the golgi apparatus membrane. The protein resides in the endoplasmic reticulum membrane. The polypeptide is Protein GMH1 (GMH1) (Saccharomyces cerevisiae (strain ATCC 204508 / S288c) (Baker's yeast)).